Reading from the N-terminus, the 1185-residue chain is Chromosome partition protein Smc (1185 aa).

Pro-32 to Asn-39 provides a ligand contact to ATP. Positions Ile-167 to Ser-494 form a coiled coil. Residues Thr-521–Ala-639 enclose the SMC hinge domain. Positions Arg-677–Met-1031 form a coiled coil.

This sequence belongs to the SMC family. In terms of assembly, homodimer.

The protein resides in the cytoplasm. In terms of biological role, required for chromosome condensation and partitioning. In Halothermothrix orenii (strain H 168 / OCM 544 / DSM 9562), this protein is Chromosome partition protein Smc.